The sequence spans 360 residues: Peptide chain release factor 1 (360 aa).

Gln-235 bears the N5-methylglutamine mark. The interval 284–313 (AKRQQAEASTRRNLLGSGDRSDRNRTYNFP) is disordered.

It belongs to the prokaryotic/mitochondrial release factor family. Methylated by PrmC. Methylation increases the termination efficiency of RF1.

It is found in the cytoplasm. In terms of biological role, peptide chain release factor 1 directs the termination of translation in response to the peptide chain termination codons UAG and UAA. The sequence is that of Peptide chain release factor 1 from Salmonella schwarzengrund (strain CVM19633).